Reading from the N-terminus, the 930-residue chain is Alanine--tRNA ligase (930 aa).

Residues H595, H599, C700, and H704 each contribute to the Zn(2+) site.

It belongs to the class-II aminoacyl-tRNA synthetase family. Zn(2+) serves as cofactor.

Its subcellular location is the cytoplasm. The enzyme catalyses tRNA(Ala) + L-alanine + ATP = L-alanyl-tRNA(Ala) + AMP + diphosphate. In terms of biological role, catalyzes the attachment of alanine to tRNA(Ala) in a two-step reaction: alanine is first activated by ATP to form Ala-AMP and then transferred to the acceptor end of tRNA(Ala). Also edits incorrectly charged Ser-tRNA(Ala) and Gly-tRNA(Ala) via its editing domain. The chain is Alanine--tRNA ligase from Malacoplasma penetrans (strain HF-2) (Mycoplasma penetrans).